The primary structure comprises 227 residues: uncharacterized protein (227 aa).

The next 5 helical transmembrane spans lie at 27–47 (AVLP…FPLL), 63–83 (PAPP…AVLG), 126–146 (TIIL…IAGV), 153–173 (VFLG…TLAG), and 186–206 (FQLI…VSAA).

Belongs to the DedA family.

The protein resides in the cell membrane. This is an uncharacterized protein from Mycobacterium tuberculosis (strain CDC 1551 / Oshkosh).